Consider the following 103-residue polypeptide: Co-chaperonin GroES (103 aa).

This sequence belongs to the GroES chaperonin family. In terms of assembly, heptamer of 7 subunits arranged in a ring. Interacts with the chaperonin GroEL.

It localises to the plastid. It is found in the cyanelle. Together with the chaperonin GroEL, plays an essential role in assisting protein folding. The GroEL-GroES system forms a nano-cage that allows encapsulation of the non-native substrate proteins and provides a physical environment optimized to promote and accelerate protein folding. GroES binds to the apical surface of the GroEL ring, thereby capping the opening of the GroEL channel. This Cyanophora paradoxa protein is Co-chaperonin GroES.